The following is a 292-amino-acid chain: Elongation factor Ts (292 aa).

The tract at residues 80–83 (TDFV) is involved in Mg(2+) ion dislocation from EF-Tu.

Belongs to the EF-Ts family.

It is found in the cytoplasm. In terms of biological role, associates with the EF-Tu.GDP complex and induces the exchange of GDP to GTP. It remains bound to the aminoacyl-tRNA.EF-Tu.GTP complex up to the GTP hydrolysis stage on the ribosome. This is Elongation factor Ts from Cupriavidus pinatubonensis (strain JMP 134 / LMG 1197) (Cupriavidus necator (strain JMP 134)).